The primary structure comprises 191 residues: Thymidine kinase (191 aa).

Residues 15 to 22 and 88 to 91 contribute to the ATP site; these read GPMYSGKT and DEAQ. Glu-89 functions as the Proton acceptor in the catalytic mechanism. 4 residues coordinate Zn(2+): Cys-145, Cys-148, Cys-183, and Cys-186.

This sequence belongs to the thymidine kinase family. Homotetramer.

Its subcellular location is the cytoplasm. It catalyses the reaction thymidine + ATP = dTMP + ADP + H(+). In Clostridium botulinum (strain Hall / ATCC 3502 / NCTC 13319 / Type A), this protein is Thymidine kinase.